Here is a 329-residue protein sequence, read N- to C-terminus: tRNA dimethylallyltransferase (329 aa).

Glycine 24 to threonine 31 lines the ATP pocket. Threonine 26–threonine 31 contributes to the substrate binding site. Positions aspartate 49–glutamine 52 are interaction with substrate tRNA.

It belongs to the IPP transferase family. In terms of assembly, monomer. It depends on Mg(2+) as a cofactor.

It carries out the reaction adenosine(37) in tRNA + dimethylallyl diphosphate = N(6)-dimethylallyladenosine(37) in tRNA + diphosphate. In terms of biological role, catalyzes the transfer of a dimethylallyl group onto the adenine at position 37 in tRNAs that read codons beginning with uridine, leading to the formation of N6-(dimethylallyl)adenosine (i(6)A). The chain is tRNA dimethylallyltransferase from Methylacidiphilum infernorum (isolate V4) (Methylokorus infernorum (strain V4)).